A 167-amino-acid chain; its full sequence is Alpha-crystallin A chain (167 aa).

The residue at position 1 (methionine 1) is an N-acetylmethionine. The 112-residue stretch at 47 to 158 folds into the sHSP domain; sequence YYRQSFFRGF…GERPIPVSRE (112 aa). Zn(2+) contacts are provided by histidine 94, glutamate 96, histidine 101, and histidine 148. Residues 143–167 form a disordered region; sequence SLDSSHGERPIPVSREEKPTSAPSS. Residues 147–161 are compositionally biased toward basic and acidic residues; it reads SHGERPIPVSREEKP. Serine 156 carries an O-linked (GlcNAc) serine glycan.

The protein belongs to the small heat shock protein (HSP20) family. Heteropolymer composed of three CRYAA and one CRYAB subunits. Inter-subunit bridging via zinc ions enhances stability, which is crucial as there is no protein turn over in the lens. Can also form homodimers and homotetramers (dimers of dimers) which serve as the building blocks of homooligomers. Within homooligomers, the zinc-binding motif is created from residues of 3 different molecules. His-94 and Glu-96 from one molecule are ligands of the zinc ion, and His-101 and His-148 residues from additional molecules complete the site with tetrahedral coordination geometry.

The protein resides in the cytoplasm. The protein localises to the nucleus. Functionally, contributes to the transparency and refractive index of the lens. May act as a chaperone, preventing aggregation of various proteins under a wide range of stress conditions. In Pelophylax lessonae (Pool frog), this protein is Alpha-crystallin A chain (CRYAA).